The primary structure comprises 173 residues: NADH-ubiquinone oxidoreductase chain 6 (173 aa).

5 helical membrane-spanning segments follow: residues 1–21 (MVYFVSMMMIGLILGLMGVAS), 28–48 (AALGLVTAAGVGCGLLVSYGG), 53–73 (LILFLIYLGGMLVVFAYTAAL), 87–107 (VLMYVGIYLTGLVIAGKYFLV), and 139–159 (LGGWMLVLSGWVLLVTLFVVL).

Belongs to the complex I subunit 6 family.

It is found in the mitochondrion membrane. It catalyses the reaction a ubiquinone + NADH + 5 H(+)(in) = a ubiquinol + NAD(+) + 4 H(+)(out). Core subunit of the mitochondrial membrane respiratory chain NADH dehydrogenase (Complex I) that is believed to belong to the minimal assembly required for catalysis. Complex I functions in the transfer of electrons from NADH to the respiratory chain. The immediate electron acceptor for the enzyme is believed to be ubiquinone. The sequence is that of NADH-ubiquinone oxidoreductase chain 6 (MT-ND6) from Scyliorhinus canicula (Small-spotted catshark).